We begin with the raw amino-acid sequence, 518 residues long: ATP synthase subunit alpha (518 aa).

169-176 (GDRQTGKT) contacts ATP.

It belongs to the ATPase alpha/beta chains family. In terms of assembly, F-type ATPases have 2 components, CF(1) - the catalytic core - and CF(0) - the membrane proton channel. CF(1) has five subunits: alpha(3), beta(3), gamma(1), delta(1), epsilon(1). CF(0) has three main subunits: a(1), b(2) and c(9-12). The alpha and beta chains form an alternating ring which encloses part of the gamma chain. CF(1) is attached to CF(0) by a central stalk formed by the gamma and epsilon chains, while a peripheral stalk is formed by the delta and b chains.

It localises to the cell membrane. The enzyme catalyses ATP + H2O + 4 H(+)(in) = ADP + phosphate + 5 H(+)(out). Its function is as follows. Produces ATP from ADP in the presence of a proton gradient across the membrane. The alpha chain is a regulatory subunit. The protein is ATP synthase subunit alpha of Mycoplasma pneumoniae (strain ATCC 29342 / M129 / Subtype 1) (Mycoplasmoides pneumoniae).